The primary structure comprises 520 residues: Putative cytochrome P450 CYP13A3 (520 aa).

Heme is bound at residue Cys-464.

This sequence belongs to the cytochrome P450 family. The cofactor is heme.

Functionally, cytochromes P450 are a group of heme-thiolate monooxygenases. They oxidize a variety of structurally unrelated compounds, including steroids, fatty acids, and xenobiotics. In Caenorhabditis elegans, this protein is Putative cytochrome P450 CYP13A3 (cyp-13A3).